The following is a 26-amino-acid chain: Omega-conotoxin CVIC (26 aa).

Cystine bridges form between Cys1-Cys16, Cys8-Cys20, and Cys15-Cys26. Position 26 is a cysteine amide (Cys26).

This sequence belongs to the conotoxin O1 superfamily. Expressed by the venom duct.

It localises to the secreted. In terms of biological role, omega-conotoxins act at presynaptic membranes, they bind and block voltage-gated calcium channels (Cav). This toxin blocks N-, P- and Q-type calcium channels. The polypeptide is Omega-conotoxin CVIC (Conus catus (Cat cone)).